The sequence spans 63 residues: MPIAQLYIIEGRTDEQKETLIRQVSEAMANSLDAPLERVRVLITEMPKNHFGIGGEPASKVRR.

Residue P2 is the Proton acceptor; via imino nitrogen of the active site.

The protein belongs to the 4-oxalocrotonate tautomerase family. Homohexamer.

It carries out the reaction (2Z,4E)-2-hydroxyhexa-2,4-dienedioate = (3E)-2-oxohex-3-enedioate. Its pathway is xenobiotic degradation; toluene degradation. Catalyzes the ketonization of 2-hydroxymuconate stereoselectively to yield 2-oxo-3-hexenedioate. The protein is 2-hydroxymuconate tautomerase (dmpI) of Pseudomonas sp. (strain CF600).